A 363-amino-acid polypeptide reads, in one-letter code: Mannose-1-phosphate guanyltransferase (363 aa).

It belongs to the transferase hexapeptide repeat family.

Its subcellular location is the cytoplasm. The catalysed reaction is alpha-D-mannose 1-phosphate + GTP + H(+) = GDP-alpha-D-mannose + diphosphate. It functions in the pathway nucleotide-sugar biosynthesis; GDP-alpha-D-mannose biosynthesis; GDP-alpha-D-mannose from alpha-D-mannose 1-phosphate (GTP route): step 1/1. In terms of biological role, involved in cell wall synthesis where it is required for glycosylation. Involved in cell cycle progression through cell-size checkpoint. Required for the correct assembly of the septum. The protein is Mannose-1-phosphate guanyltransferase (mpg1) of Schizosaccharomyces pombe (strain 972 / ATCC 24843) (Fission yeast).